The primary structure comprises 290 residues: Probable endonuclease 4 (290 aa).

Residues His-69, His-109, Glu-145, Asp-179, His-182, His-216, Asp-229, His-231, and Glu-261 each contribute to the Zn(2+) site.

The protein belongs to the AP endonuclease 2 family. Zn(2+) serves as cofactor.

It catalyses the reaction Endonucleolytic cleavage to 5'-phosphooligonucleotide end-products.. Endonuclease IV plays a role in DNA repair. It cleaves phosphodiester bonds at apurinic or apyrimidinic (AP) sites, generating a 3'-hydroxyl group and a 5'-terminal sugar phosphate. In Chlorobium limicola (strain DSM 245 / NBRC 103803 / 6330), this protein is Probable endonuclease 4.